The sequence spans 306 residues: Polyisoprenyl-teichoic acid--peptidoglycan teichoic acid transferase TagU (306 aa).

The Cytoplasmic portion of the chain corresponds to 1 to 11 (MRAEKRKKKKK). Residues 12–32 (ILYTIIALIGIFVLSTGSYAY) traverse the membrane as a helical; Signal-anchor for type II membrane protein segment. Topologically, residues 33 to 306 (YLWHKAASTV…TAELKESLNK (274 aa)) are extracellular.

Belongs to the LytR/CpsA/Psr (LCP) family.

It localises to the cell membrane. It functions in the pathway cell wall biogenesis. In terms of biological role, may catalyze the final step in cell wall teichoic acid biosynthesis, the transfer of the anionic cell wall polymers (APs) from their lipid-linked precursor to the cell wall peptidoglycan (PG). The chain is Polyisoprenyl-teichoic acid--peptidoglycan teichoic acid transferase TagU from Bacillus licheniformis (strain ATCC 14580 / DSM 13 / JCM 2505 / CCUG 7422 / NBRC 12200 / NCIMB 9375 / NCTC 10341 / NRRL NRS-1264 / Gibson 46).